Here is a 334-residue protein sequence, read N- to C-terminus: Holliday junction branch migration complex subunit RuvB (334 aa).

The large ATPase domain (RuvB-L) stretch occupies residues 4–184; it reads ADRLIQPQLQ…FGIPLRLEFY (181 aa). ATP-binding positions include arginine 24, glycine 65, lysine 68, threonine 69, threonine 70, 131–133, arginine 174, tyrosine 184, and arginine 221; that span reads EDY. Position 69 (threonine 69) interacts with Mg(2+). The tract at residues 185-255 is small ATPAse domain (RuvB-S); the sequence is NVKDLSTIVT…VAELALNLLD (71 aa). The segment at 258–334 is head domain (RuvB-H); it reads GEGFDYMDRK…YVHFGMIKPE (77 aa). Arginine 294, arginine 313, and arginine 318 together coordinate DNA.

Belongs to the RuvB family. As to quaternary structure, homohexamer. Forms an RuvA(8)-RuvB(12)-Holliday junction (HJ) complex. HJ DNA is sandwiched between 2 RuvA tetramers; dsDNA enters through RuvA and exits via RuvB. An RuvB hexamer assembles on each DNA strand where it exits the tetramer. Each RuvB hexamer is contacted by two RuvA subunits (via domain III) on 2 adjacent RuvB subunits; this complex drives branch migration. In the full resolvosome a probable DNA-RuvA(4)-RuvB(12)-RuvC(2) complex forms which resolves the HJ.

The protein resides in the cytoplasm. The enzyme catalyses ATP + H2O = ADP + phosphate + H(+). The RuvA-RuvB-RuvC complex processes Holliday junction (HJ) DNA during genetic recombination and DNA repair, while the RuvA-RuvB complex plays an important role in the rescue of blocked DNA replication forks via replication fork reversal (RFR). RuvA specifically binds to HJ cruciform DNA, conferring on it an open structure. The RuvB hexamer acts as an ATP-dependent pump, pulling dsDNA into and through the RuvAB complex. RuvB forms 2 homohexamers on either side of HJ DNA bound by 1 or 2 RuvA tetramers; 4 subunits per hexamer contact DNA at a time. Coordinated motions by a converter formed by DNA-disengaged RuvB subunits stimulates ATP hydrolysis and nucleotide exchange. Immobilization of the converter enables RuvB to convert the ATP-contained energy into a lever motion, pulling 2 nucleotides of DNA out of the RuvA tetramer per ATP hydrolyzed, thus driving DNA branch migration. The RuvB motors rotate together with the DNA substrate, which together with the progressing nucleotide cycle form the mechanistic basis for DNA recombination by continuous HJ branch migration. Branch migration allows RuvC to scan DNA until it finds its consensus sequence, where it cleaves and resolves cruciform DNA. The sequence is that of Holliday junction branch migration complex subunit RuvB from Shewanella oneidensis (strain ATCC 700550 / JCM 31522 / CIP 106686 / LMG 19005 / NCIMB 14063 / MR-1).